Reading from the N-terminus, the 206-residue chain is Large ribosomal subunit protein uL4 (206 aa).

The tract at residues 63 to 98 (MYRQKGTGRARHSSARAPQFRGGGKAHGPVPHSHAH) is disordered. Residues 64–76 (YRQKGTGRARHSS) are compositionally biased toward basic residues.

It belongs to the universal ribosomal protein uL4 family. As to quaternary structure, part of the 50S ribosomal subunit.

In terms of biological role, one of the primary rRNA binding proteins, this protein initially binds near the 5'-end of the 23S rRNA. It is important during the early stages of 50S assembly. It makes multiple contacts with different domains of the 23S rRNA in the assembled 50S subunit and ribosome. Its function is as follows. Forms part of the polypeptide exit tunnel. The protein is Large ribosomal subunit protein uL4 of Chelativorans sp. (strain BNC1).